Consider the following 512-residue polypeptide: Neuronal acetylcholine receptor subunit alpha-3 (512 aa).

The signal sequence occupies residues 1–23; that stretch reads MNSASRITLFFLLTVLITQECLS. The Extracellular portion of the chain corresponds to 24–242; that stretch reads SKGEDRLFRR…PLFYTINLII (219 aa). Asn47 and Asn164 each carry an N-linked (GlcNAc...) asparagine glycan. Disulfide bonds link Cys151–Cys165 and Cys215–Cys216. Residues 243 to 258 traverse the membrane as a helical segment; that stretch reads PCLLISFLTILVFYLP. Over 259–260 the chain is Cytoplasmic; that stretch reads SD. A helical membrane pass occupies residues 261-277; the sequence is CGEKVTLCISVLLSLTV. Glu263 provides a ligand contact to Na(+). Residues 278–299 lie on the Extracellular side of the membrane; it reads FLLVITETIPSTSLVIPLIGEY. A helical transmembrane segment spans residues 300–318; sequence LLFTMIFVTLSIVITVFVL. Residues 319 to 482 are Cytoplasmic-facing; it reads NVHYRTPMTH…EDDWKYVAMV (164 aa). Residues 356–389 are disordered; sequence ESSGKGGGEIAGSSGTGGGRGAEGKKMKSSASQQ. A compositionally biased stretch (gly residues) spans 359–376; that stretch reads GKGGGEIAGSSGTGGGRG. The chain crosses the membrane as a helical span at residues 483–501; sequence IDRIFLWVFVLVCVLGTLG. Residues 502-512 are Extracellular-facing; the sequence is LFLQPLIGFFS.

The protein belongs to the ligand-gated ion channel (TC 1.A.9) family. Acetylcholine receptor (TC 1.A.9.1) subfamily. Alpha-3/CHRNA3 sub-subfamily. As to quaternary structure, neuronal AChR is composed of two different types of subunits: alpha and beta. CHRNA3/Alpha-3 subunit can be combined to CHRNB2/beta-2 or CHRNB4/beta-4 to give rise to functional receptors. Expressed in retina and brain.

The protein localises to the synaptic cell membrane. It is found in the cell membrane. It localises to the endoplasmic reticulum. The protein resides in the golgi apparatus. The enzyme catalyses K(+)(in) = K(+)(out). The catalysed reaction is Na(+)(in) = Na(+)(out). It carries out the reaction Ca(2+)(in) = Ca(2+)(out). Its activity is regulated as follows. Activated by a myriad of ligands such as acetylcholine, cytisine, nicotine, choline and epibatidine. The heteropentamer CHRNA3:CHRNB2 activity is blocked by alpha-conotoxins ImI, ImII, PnIA, GID and MII. The heteropentamer CHRNA3:CHRNB4 activity is blocked by the alpha-conotoxin ImI and AuIB. Its function is as follows. Component of neuronal acetylcholine receptors (nAChRs) that function as pentameric, ligand-gated cation channels with high calcium permeability among other activities. nAChRs are excitatory neurotrasnmitter receptors formed by a collection of nAChR subunits known to mediate synaptic transmission in the nervous system and the neuromuscular junction. Each nAchR subunit confers differential attributes to channel properties, including activation, deactivation and desensitization kinetics, pH sensitivity, cation permeability, and binding to allosteric modulators. CHRNA3 forms heteropentameric neuronal acetylcholine receptors with CHRNB2 and CHRNB4. CHRNA3:CHRNB4 being predominant in neurons of the autonomic ganglia, it is known as ganglionic nicotinic receptor. CHRNA3:CHRNB4 also plays an important role in the habenulo-interpeduncular tract, modulating the mesolimbic dopamine system and affecting reward circuits and addiction. Hypothalamic CHRNA3:CHRNB4 nAChR activation by nicotine leads to activation of POMC neurons and a decrease in food intake. Also expressed in the urothelium where it modulates reflex bladder activity by increasing intracellular calcium through extracellular influx and basal ATP release. The sequence is that of Neuronal acetylcholine receptor subunit alpha-3 (chrna3) from Carassius auratus (Goldfish).